The sequence spans 266 residues: Tryptophan synthase alpha chain (266 aa).

Active-site proton acceptor residues include E47 and D58.

This sequence belongs to the TrpA family. Tetramer of two alpha and two beta chains.

It is found in the plastid. It localises to the chloroplast. It carries out the reaction (1S,2R)-1-C-(indol-3-yl)glycerol 3-phosphate + L-serine = D-glyceraldehyde 3-phosphate + L-tryptophan + H2O. It functions in the pathway amino-acid biosynthesis; L-tryptophan biosynthesis; L-tryptophan from chorismate: step 5/5. The alpha subunit is responsible for the aldol cleavage of indoleglycerol phosphate to indole and glyceraldehyde 3-phosphate. The sequence is that of Tryptophan synthase alpha chain from Cyanidium caldarium (Red alga).